Consider the following 353-residue polypeptide: G-protein complex alpha subunit gpaA (353 aa).

The interval 1–25 (MGCGMSTEDKEGKARNEEIENQLKR) is disordered. A compositionally biased stretch (basic and acidic residues) spans 7-25 (TEDKEGKARNEEIENQLKR). In terms of domain architecture, G-alpha spans 32 to 353 (NEIKMLLLGA…QENLRLCGLI (322 aa)). The G1 motif stretch occupies residues 35-48 (KMLLLGAGESGKST). The a divalent metal cation site is built by Ser47 and Thr181. The interval 173-181 (DVLRSRVKT) is G2 motif. Positions 196 to 205 (YRMFDVGGQR) are G3 motif. A G4 motif region spans residues 265 to 272 (ILFLNKID). Positions 323–328 (TCATDT) are G5 motif.

Belongs to the G-alpha family. G(q) subfamily. In terms of assembly, g proteins are composed of 3 units; alpha, beta and gamma. The alpha chain contains the guanine nucleotide binding site. Interacts with gprM.

G-protein complex alpha subunit that plays a role in conidiation and regulation of the biosynthesis of secondary metabolites such as dihydroxynaphthalene (DHN)-melanin, via interaction with the G protein-coupled receptor gprM. This is G-protein complex alpha subunit gpaA from Aspergillus fumigatus (strain CBS 144.89 / FGSC A1163 / CEA10) (Neosartorya fumigata).